The chain runs to 124 residues: Small ribosomal subunit protein uS12 (124 aa).

Asp-89 carries the 3-methylthioaspartic acid modification.

The protein belongs to the universal ribosomal protein uS12 family. As to quaternary structure, part of the 30S ribosomal subunit. Contacts proteins S8 and S17. May interact with IF1 in the 30S initiation complex.

Its function is as follows. With S4 and S5 plays an important role in translational accuracy. Functionally, interacts with and stabilizes bases of the 16S rRNA that are involved in tRNA selection in the A site and with the mRNA backbone. Located at the interface of the 30S and 50S subunits, it traverses the body of the 30S subunit contacting proteins on the other side and probably holding the rRNA structure together. The combined cluster of proteins S8, S12 and S17 appears to hold together the shoulder and platform of the 30S subunit. The sequence is that of Small ribosomal subunit protein uS12 from Buchnera aphidicola subsp. Schizaphis graminum (strain Sg).